Consider the following 310-residue polypeptide: ADP-L-glycero-D-manno-heptose-6-epimerase (310 aa).

NADP(+) contacts are provided by residues 10–11 (LI), 31–32 (DN), Lys-38, Lys-53, 75–79 (EGACS), and Asn-92. The active-site Proton acceptor is the Tyr-140. Residue Lys-144 participates in NADP(+) binding. Asn-169 lines the substrate pocket. Positions 170 and 178 each coordinate NADP(+). The active-site Proton acceptor is Lys-178. Residues Ser-180, His-187, 201–204 (FAGS), Arg-209, and Tyr-272 contribute to the substrate site.

This sequence belongs to the NAD(P)-dependent epimerase/dehydratase family. HldD subfamily. Homopentamer. NADP(+) serves as cofactor.

It carries out the reaction ADP-D-glycero-beta-D-manno-heptose = ADP-L-glycero-beta-D-manno-heptose. Its pathway is nucleotide-sugar biosynthesis; ADP-L-glycero-beta-D-manno-heptose biosynthesis; ADP-L-glycero-beta-D-manno-heptose from D-glycero-beta-D-manno-heptose 7-phosphate: step 4/4. Catalyzes the interconversion between ADP-D-glycero-beta-D-manno-heptose and ADP-L-glycero-beta-D-manno-heptose via an epimerization at carbon 6 of the heptose. The sequence is that of ADP-L-glycero-D-manno-heptose-6-epimerase from Erwinia tasmaniensis (strain DSM 17950 / CFBP 7177 / CIP 109463 / NCPPB 4357 / Et1/99).